A 479-amino-acid chain; its full sequence is GTPase Obg (479 aa).

Residues 2-159 form the Obg domain; the sequence is PRFVDRVVIH…RDLTLELKTV (158 aa). The 181-residue stretch at 160–340 folds into the OBG-type G domain; the sequence is ADVGLVGFPS…LIFGLWQMVS (181 aa). Residues 166 to 173, 191 to 195, 212 to 215, 292 to 295, and 321 to 323 each bind GTP; these read GFPSAGKS, FTTLV, DVPG, NKID, and STV. Positions 173 and 193 each coordinate Mg(2+). An OCT domain is found at 358–436; sequence PVPVDDSGFD…IGEMTFDWEP (79 aa). A disordered region spans residues 438 to 479; that stretch reads TPAGGHVAMSGRGTDVRLERSDRVGAAERKAARRQRRERDDD. Over residues 451–467 the composition is skewed to basic and acidic residues; sequence TDVRLERSDRVGAAERK.

The protein belongs to the TRAFAC class OBG-HflX-like GTPase superfamily. OBG GTPase family. Monomer. Mg(2+) is required as a cofactor.

The protein localises to the cytoplasm. In terms of biological role, an essential GTPase which binds GTP, GDP and possibly (p)ppGpp with moderate affinity, with high nucleotide exchange rates and a fairly low GTP hydrolysis rate. Plays a role in control of the cell cycle, stress response, ribosome biogenesis and in those bacteria that undergo differentiation, in morphogenesis control. The chain is GTPase Obg from Mycobacterium marinum (strain ATCC BAA-535 / M).